The primary structure comprises 418 residues: MSLTTIIFDNGGHNMKIGTIDSESPRLVPNSIVKAKHEKKRVFVAHEQEECSDKFSLFYVRPIERGYVVNWDTQQQIWEKTFGSMDVEASTSRIALTDNNYLIPALPDVSSEILFDYFGFTEVHKTSASTLVAKHSNKINNEKCAVVVDSGFSWTTVASFVNGMLIQDSVIRIDVGGKALTNKLKDWVSYRQLNVSEETYVINECKEDLCFVSQNFDESMKEARNRFQENTTMKRYIMPDFHSTFRGVVKDVKEPHDPQIPSIHLGVERFAIPEILFNPSDIDIDQCGVAEAVIESICQCPEALRPALAENIIVIGGSSCFPGFRERLEREVRSMLPAEYGLNVSNDVINPQTHSWHCGQELLTASKVPWINRKDWDERGDSLEFSNFFQTLVQSDELKGTRNFDDQREKSPKEDEDF.

It belongs to the actin family. ARP6 subfamily.

The protein resides in the cytoplasm. Its subcellular location is the cytoskeleton. In Caenorhabditis elegans, this protein is Actin-like protein C08B11.6 (arp-6).